The following is a 726-amino-acid chain: Catalase-peroxidase (726 aa).

The disordered stretch occupies residues 1-33 (MSTSDDIHNTTATGKCPFHQGGHDQSAGAGTTT). A cross-link (tryptophyl-tyrosyl-methioninium (Trp-Tyr) (with M-252)) is located at residues 105-226 (WHGAGTYRSI…LGATEMGLIY (122 aa)). His-106 functions as the Proton acceptor in the catalytic mechanism. Positions 226-252 (YVNPEGPDHSGEPLSAAAAIRATFGNM) form a cross-link, tryptophyl-tyrosyl-methioninium (Tyr-Met) (with W-105). Residue His-267 coordinates heme b.

This sequence belongs to the peroxidase family. Peroxidase/catalase subfamily. In terms of assembly, homodimer or homotetramer. It depends on heme b as a cofactor. Formation of the three residue Trp-Tyr-Met cross-link is important for the catalase, but not the peroxidase activity of the enzyme.

The enzyme catalyses H2O2 + AH2 = A + 2 H2O. It carries out the reaction 2 H2O2 = O2 + 2 H2O. Its function is as follows. Bifunctional enzyme with both catalase and broad-spectrum peroxidase activity. In Shigella sonnei (strain Ss046), this protein is Catalase-peroxidase.